We begin with the raw amino-acid sequence, 51 residues long: Putative protein LomR (51 aa).

This sequence belongs to the outer membrane OOP (TC 1.B.6) superfamily. Ail family.

The chain is Putative protein LomR (lomR) from Escherichia coli (strain K12).